The primary structure comprises 194 residues: Rho-related protein racC (194 aa).

GTP is bound by residues A17, G19, K20, T21, C22, E34, Y36, T39, G64, K120, D122, A163, and K164. Residue T21 coordinates Mg(2+). 2 short sequence motifs (switch) span residues 30-41 and 61-79; these read RKFPEDYIPTVF and DTAG…YSSA. T39 serves as a coordination point for Mg(2+). C191 is modified (cysteine methyl ester). C191 carries the S-geranylgeranyl cysteine lipid modification. Residues 192-194 constitute a propeptide, removed in mature form; it reads ALL.

The protein belongs to the small GTPase superfamily. Rho family. As to quaternary structure, interacts (GTP-bound form) with PAK4 (via CRIB domain). Interacts (GTP-bound form) with PAK5 (via CRIB domain). It depends on Mg(2+) as a cofactor.

It is found in the cell membrane. The protein resides in the cytoplasm. It localises to the cytoskeleton. The enzyme catalyses GTP + H2O = GDP + phosphate + H(+). With respect to regulation, regulated by guanine nucleotide exchange factors (GEFs) which promote the exchange of bound GDP for free GTP, GTPase activating proteins (GAPs) which increase the GTP hydrolysis activity, and GDP dissociation inhibitors which inhibit the dissociation of the nucleotide from the GTPase. Functionally, small GTPase which cycles between active GTP-bound and inactive GDP-bound states. The polypeptide is Rho-related protein racC (Entamoeba histolytica (strain ATCC 30459 / HM-1:IMSS / ABRM)).